The primary structure comprises 275 residues: Bis(5'-nucleosyl)-tetraphosphatase, symmetrical (275 aa).

It belongs to the Ap4A hydrolase family.

It carries out the reaction P(1),P(4)-bis(5'-adenosyl) tetraphosphate + H2O = 2 ADP + 2 H(+). Hydrolyzes diadenosine 5',5'''-P1,P4-tetraphosphate to yield ADP. This Hamiltonella defensa subsp. Acyrthosiphon pisum (strain 5AT) protein is Bis(5'-nucleosyl)-tetraphosphatase, symmetrical.